We begin with the raw amino-acid sequence, 260 residues long: Methylthioribulose-1-phosphate dehydratase (260 aa).

The tract at residues 1-26 is disordered; the sequence is MTPPTTGLPAENTTDDNDHLVQSDDP. Residues 16-26 are compositionally biased toward basic and acidic residues; it reads DNDHLVQSDDP. Residue Cys-109 coordinates substrate. Positions 127 and 129 each coordinate Zn(2+). The Proton donor/acceptor role is filled by Glu-154. His-211 contacts Zn(2+).

This sequence belongs to the aldolase class II family. MtnB subfamily. It depends on Zn(2+) as a cofactor.

It localises to the cytoplasm. The catalysed reaction is 5-(methylsulfanyl)-D-ribulose 1-phosphate = 5-methylsulfanyl-2,3-dioxopentyl phosphate + H2O. Its pathway is amino-acid biosynthesis; L-methionine biosynthesis via salvage pathway; L-methionine from S-methyl-5-thio-alpha-D-ribose 1-phosphate: step 2/6. In terms of biological role, catalyzes the dehydration of methylthioribulose-1-phosphate (MTRu-1-P) into 2,3-diketo-5-methylthiopentyl-1-phosphate (DK-MTP-1-P). This Podospora anserina (strain S / ATCC MYA-4624 / DSM 980 / FGSC 10383) (Pleurage anserina) protein is Methylthioribulose-1-phosphate dehydratase.